A 1375-amino-acid polypeptide reads, in one-letter code: MDRTKRRKIEKEASLLNERNNLLESDFANCYRAFQHQLKLDQQIWRGPEDELNRLKSTIYPVVFWVDGSEKLHAYSFTQRKISLAKNLIPLFSVDLNKDTYSALKAPLKIWSKLWEDNRRLKKIIKYTSYVTVKGSELILSFGISILDSFLAPQDAILSSGSSSSYTALLDYTFLPSEDEEYSCLDINTALFYDCARKLAKSLRFANVSRDPRLSSELLPFQMRVLEWMKRREEEKFLTSNDLPPLWYHCKSLFDDRMVYVNHVYGYMTFSKEKTYLLASGDIRGGILADEMGMGKTLEVLGLVLHHQLPISLTDTCTFDQVVGKNVKYSKATLIITPSTILDQWLSEIDLHVPSLKVFHYQGIRKSNGLKSAKIFLDCDIVVTSYSDLRFELLYTESHSRTLRHEKRHVSPKSPLIDVCWWRICVDEAQMVETSQSNVAQMIYRIPRVNCWTVSGTPVRSEVDDLFGLLFLLRYSPMYLYKKQAWMQIIEKKRVREFCDLFGSLVCRHSKQDVEEELKLPPQHRICMTTRLSVVEETNYQDLLSEAAKSLHFFKDRNLDLCDEESMRRWLVRLRQACCHPQVGFGNKSAFGGGPMKSINDVLVFMLEQTNSTFSSLNRKLYSDKIIVGQIYDHIKDYNKALAIWSEVRIPVELAVKELENVIYNSKYEDHGKNLPINYFGLDHFIHLRVWYVLLHKIYFFIASAYFSLKNEKFENEFYLLAQDLRRKIMSDVIIKTSKHLEEFSEKFIPKKLVKIPRLQKSYAKGLITGHGIIEDYNRLYKELNDQKEVLIKFRDRLIHLMKLPLLDQESDPTGDEYEESLNAQSEISYCIDVYRQMLSDRVAAVSGTINTFVSHETELEKYKLIESIKKSEKSLDKQAEERDKKYLLYFEEREEARPKADQYGSLINIVSRLLDASNRSTSSFETSKNMEEYERIDAMAKEQSRICQKLEKELSIIQLTYNSRIEYYKQLQEISDSLMPPPVSNISLNNYVKDDEKKQKFLNSVIIKASVILEKEISEKQDEASQTTNVAELVNQKISEMNIPGHIHLLRELEEEKSNTQRKIAHFESRRRYLTNLYEHIVLKAESHQICIICRDIIKQGFITTCGHLYCSFCLEAWLKHSSSCPMCKTKLNKNNAYYIGESRDIYSRQEFVTGFNKRDERLEILDDEAYRQISNMELKESFGSKIDTISKHLLYLKHNELYPKVVVFSQWLDVLDVLHKSFEANGIVFIRFDGKSKNTCLKRFKEERSLQVLTLHARSQSSGLTLTNATHVFMCEPLLNSGIEMQAISRVHRIGQTRPTFVYYYIVEDTVEGHILNLSLTKHEQLDKLGLDVPLVGNINRTTEASSGGEQVDAAEIKDCLKMALKRLTTEDS.

Positions 277–476 constitute a Helicase ATP-binding domain; the sequence is LLASGDIRGG…FGLLFLLRYS (200 aa). 290 to 297 is a binding site for ATP; sequence DEMGMGKT. The RING-type zinc-finger motif lies at 1092–1130; sequence CIICRDIIKQGFITTCGHLYCSFCLEAWLKHSSSCPMCK. A Helicase C-terminal domain is found at 1190–1336; that stretch reads TISKHLLYLK…QLDKLGLDVP (147 aa).

It belongs to the SNF2/RAD54 helicase family.

The protein localises to the nucleus. This is an uncharacterized protein from Schizosaccharomyces pombe (strain 972 / ATCC 24843) (Fission yeast).